We begin with the raw amino-acid sequence, 185 residues long: Pyruvate/ketoisovalerate oxidoreductases common subunit gamma (185 aa).

As to quaternary structure, heterotetramer of one alpha, one beta, one delta and one gamma chain.

It carries out the reaction 2 oxidized [2Fe-2S]-[ferredoxin] + pyruvate + CoA = 2 reduced [2Fe-2S]-[ferredoxin] + acetyl-CoA + CO2 + H(+). It catalyses the reaction 3-methyl-2-oxobutanoate + 2 oxidized [2Fe-2S]-[ferredoxin] + CoA = 2-methylpropanoyl-CoA + 2 reduced [2Fe-2S]-[ferredoxin] + CO2 + H(+). The polypeptide is Pyruvate/ketoisovalerate oxidoreductases common subunit gamma (porG) (Thermococcus litoralis (strain ATCC 51850 / DSM 5473 / JCM 8560 / NS-C)).